A 118-amino-acid polypeptide reads, in one-letter code: Holo-[acyl-carrier-protein] synthase (118 aa).

Residues aspartate 6 and glutamate 55 each coordinate Mg(2+).

It belongs to the P-Pant transferase superfamily. AcpS family. Mg(2+) is required as a cofactor.

The protein resides in the cytoplasm. It catalyses the reaction apo-[ACP] + CoA = holo-[ACP] + adenosine 3',5'-bisphosphate + H(+). Transfers the 4'-phosphopantetheine moiety from coenzyme A to a Ser of acyl-carrier-protein. The chain is Holo-[acyl-carrier-protein] synthase from Chlorobium chlorochromatii (strain CaD3).